The sequence spans 159 residues: Cyclic pyranopterin monophosphate synthase (159 aa).

Substrate contacts are provided by residues 75–77 (LCH) and 113–114 (ME). Residue D128 is part of the active site.

This sequence belongs to the MoaC family. In terms of assembly, homohexamer; trimer of dimers.

It carries out the reaction (8S)-3',8-cyclo-7,8-dihydroguanosine 5'-triphosphate = cyclic pyranopterin phosphate + diphosphate. The protein operates within cofactor biosynthesis; molybdopterin biosynthesis. Catalyzes the conversion of (8S)-3',8-cyclo-7,8-dihydroguanosine 5'-triphosphate to cyclic pyranopterin monophosphate (cPMP). This chain is Cyclic pyranopterin monophosphate synthase, found in Burkholderia multivorans (strain ATCC 17616 / 249).